We begin with the raw amino-acid sequence, 459 residues long: FBD-associated F-box protein At5g27750 (459 aa).

In terms of domain architecture, F-box spans 4-50 (FDRISELPESLITQILLCLPTKDSVKTSVLSTRWKNLWLNVPGLDLT). Positions 374–426 (TEELNLINVPRCIVSTLECVEIKGLFEWEEEEMKIARYFLENAAVLKKLTMSF) constitute an FBD domain.

This is FBD-associated F-box protein At5g27750 from Arabidopsis thaliana (Mouse-ear cress).